The primary structure comprises 189 residues: Peptidyl-tRNA hydrolase (189 aa).

A tRNA-binding site is contributed by Tyr-15. His-20 functions as the Proton acceptor in the catalytic mechanism. Residues Phe-66, Asn-68, and Asn-114 each coordinate tRNA.

The protein belongs to the PTH family. Monomer.

It localises to the cytoplasm. It carries out the reaction an N-acyl-L-alpha-aminoacyl-tRNA + H2O = an N-acyl-L-amino acid + a tRNA + H(+). In terms of biological role, hydrolyzes ribosome-free peptidyl-tRNAs (with 1 or more amino acids incorporated), which drop off the ribosome during protein synthesis, or as a result of ribosome stalling. Its function is as follows. Catalyzes the release of premature peptidyl moieties from peptidyl-tRNA molecules trapped in stalled 50S ribosomal subunits, and thus maintains levels of free tRNAs and 50S ribosomes. This is Peptidyl-tRNA hydrolase from Streptococcus equi subsp. zooepidemicus (strain MGCS10565).